The following is a 121-amino-acid chain: Phospholipase A2 homolog ECO_00035 (121 aa).

7 disulfides stabilise this stretch: C25–C114, C27–C43, C42–C94, C48–C121, C49–C87, C56–C80, and C74–C85. The interval 104–116 is important for membrane-damaging activities in eukaryotes and bacteria; heparin-binding; that stretch reads KKYKIYPNILCRG.

Belongs to the phospholipase A2 family. Group II subfamily. S49 sub-subfamily. Monomer. In terms of tissue distribution, expressed by the venom gland.

Its subcellular location is the secreted. In terms of biological role, snake venom phospholipase A2 homolog that lacks enzymatic activity. Shows high myotoxin activities and displays edema-inducing activities. Has cytotoxic activities against HUVEC cells (LC(50)=4.9 uL) and human lung adenocarcinoma A549 cells (LC(50)=3.5 uL). The chain is Phospholipase A2 homolog ECO_00035 from Echis coloratus (Carpet viper).